Consider the following 1604-residue polypeptide: Transposon Ty1-DR4 Gag-Pol polyprotein (1604 aa).

Composition is skewed to polar residues over residues 1-23, 48-60, and 127-152; these read MESQ…SVTS, TKAN…TPAS, and QSQF…GNTF. Disordered stretches follow at residues 1 to 93, 126 to 174, and 352 to 421; these read MESQ…MMTQ, PQSQ…PPPM, and GSRN…SKST. Residues 153–165 show a composition bias toward low complexity; that stretch reads TDSSSADSDMTST. The tract at residues 299-401 is RNA-binding; that stretch reads NNGIHINNKV…NSKSKTARAH (103 aa). Residues 402 to 418 are compositionally biased toward low complexity; sequence NVSTSNNSPSTDNDSIS. Residue S416 is modified to Phosphoserine. D461 acts as the For protease activity; shared with dimeric partner in catalysis. Residues 583–640 are integrase-type zinc finger-like; the sequence is NVHTSESTRKYPYPFIHRMLAHANAQTIRYSLKNNTITYFNESDVDWSSAIDYQCPDC. The region spanning 660 to 835 is the Integrase catalytic domain; that stretch reads NSYEPFQYLH…AGLDISTLLP (176 aa). 2 residues coordinate Mg(2+): D671 and D736. 3 disordered regions span residues 956 to 1087, 1092 to 1111, and 1130 to 1187; these read SKAV…ETEK, RSPS…NIVP, and DLPL…DNET. Positions 960–969 are enriched in low complexity; it reads SPTDSTPPST. Positions 1005 to 1015 are enriched in polar residues; that stretch reads STPQISNIEST. Basic and acidic residues predominate over residues 1038 to 1053; that stretch reads ESSHASKSKDFRHSDS. 2 stretches are compositionally biased toward polar residues: residues 1054-1082 and 1101-1111; these read YSEN…QISD and PENNSSHNIVP. Residues 1178 to 1212 carry the Bipartite nuclear localization signal motif; sequence KKRSLEDNETEIKVSRDTWNTKNMRSLEPPRSKKR. Residues 1338–1476 form the Reverse transcriptase Ty1/copia-type domain; that stretch reads NNYYITQLDI…DILGLEIKYQ (139 aa). Residues D1346, D1427, and D1428 each contribute to the Mg(2+) site.

The capsid protein forms a homotrimer, from which the VLPs are assembled. The protease is a homodimer, whose active site consists of two apposed aspartic acid residues. In terms of processing, initially, virus-like particles (VLPs) are composed of the structural unprocessed proteins Gag and Gag-Pol, and also contain the host initiator methionine tRNA (tRNA(i)-Met) which serves as a primer for minus-strand DNA synthesis, and a dimer of genomic Ty RNA. Processing of the polyproteins occurs within the particle and proceeds by an ordered pathway, called maturation. First, the protease (PR) is released by autocatalytic cleavage of the Gag-Pol polyprotein yielding capsid protein p45 and a Pol-p154 precursor protein. This cleavage is a prerequisite for subsequent processing of Pol-p154 at the remaining sites to release the mature structural and catalytic proteins. Maturation takes place prior to the RT reaction and is required to produce transposition-competent VLPs.

The protein resides in the cytoplasm. The protein localises to the nucleus. The catalysed reaction is DNA(n) + a 2'-deoxyribonucleoside 5'-triphosphate = DNA(n+1) + diphosphate. It carries out the reaction Endonucleolytic cleavage to 5'-phosphomonoester.. Capsid protein (CA) is the structural component of the virus-like particle (VLP), forming the shell that encapsulates the retrotransposons dimeric RNA genome. The particles are assembled from trimer-clustered units and there are holes in the capsid shells that allow for the diffusion of macromolecules. CA also has nucleocapsid-like chaperone activity, promoting primer tRNA(i)-Met annealing to the multipartite primer-binding site (PBS), dimerization of Ty1 RNA and initiation of reverse transcription. Functionally, the aspartyl protease (PR) mediates the proteolytic cleavages of the Gag and Gag-Pol polyproteins after assembly of the VLP. Its function is as follows. Reverse transcriptase/ribonuclease H (RT) is a multifunctional enzyme that catalyzes the conversion of the retro-elements RNA genome into dsDNA within the VLP. The enzyme displays a DNA polymerase activity that can copy either DNA or RNA templates, and a ribonuclease H (RNase H) activity that cleaves the RNA strand of RNA-DNA heteroduplexes during plus-strand synthesis and hydrolyzes RNA primers. The conversion leads to a linear dsDNA copy of the retrotransposon that includes long terminal repeats (LTRs) at both ends. In terms of biological role, integrase (IN) targets the VLP to the nucleus, where a subparticle preintegration complex (PIC) containing at least integrase and the newly synthesized dsDNA copy of the retrotransposon must transit the nuclear membrane. Once in the nucleus, integrase performs the integration of the dsDNA into the host genome. This is Transposon Ty1-DR4 Gag-Pol polyprotein (TY1B-DR4) from Saccharomyces cerevisiae (strain ATCC 204508 / S288c) (Baker's yeast).